A 268-amino-acid chain; its full sequence is Thiazole synthase (268 aa).

The Schiff-base intermediate with DXP role is filled by Lys100. 1-deoxy-D-xylulose 5-phosphate-binding positions include Gly161, 187–188, and 209–210; these read AG and NT. The tract at residues 248–268 is disordered; that stretch reads ATPSSPSEGMITGSPHSAANN.

The protein belongs to the ThiG family. Homotetramer. Forms heterodimers with either ThiH or ThiS.

Its subcellular location is the cytoplasm. It catalyses the reaction [ThiS sulfur-carrier protein]-C-terminal-Gly-aminoethanethioate + 2-iminoacetate + 1-deoxy-D-xylulose 5-phosphate = [ThiS sulfur-carrier protein]-C-terminal Gly-Gly + 2-[(2R,5Z)-2-carboxy-4-methylthiazol-5(2H)-ylidene]ethyl phosphate + 2 H2O + H(+). It functions in the pathway cofactor biosynthesis; thiamine diphosphate biosynthesis. Functionally, catalyzes the rearrangement of 1-deoxy-D-xylulose 5-phosphate (DXP) to produce the thiazole phosphate moiety of thiamine. Sulfur is provided by the thiocarboxylate moiety of the carrier protein ThiS. In vitro, sulfur can be provided by H(2)S. This chain is Thiazole synthase, found in Nitrosomonas eutropha (strain DSM 101675 / C91 / Nm57).